A 209-amino-acid polypeptide reads, in one-letter code: Kynurenine formamidase (209 aa).

Substrate is bound at residue Trp20. Zn(2+) is bound by residues His50, His54, and Asp56. Residue His60 is the Proton donor/acceptor of the active site. Residues His161 and Glu173 each coordinate Zn(2+).

This sequence belongs to the Cyclase 1 superfamily. KynB family. Homodimer. Zn(2+) is required as a cofactor.

The enzyme catalyses N-formyl-L-kynurenine + H2O = L-kynurenine + formate + H(+). The protein operates within amino-acid degradation; L-tryptophan degradation via kynurenine pathway; L-kynurenine from L-tryptophan: step 2/2. Its function is as follows. Catalyzes the hydrolysis of N-formyl-L-kynurenine to L-kynurenine, the second step in the kynurenine pathway of tryptophan degradation. This chain is Kynurenine formamidase, found in Bacillus cereus (strain ATCC 10987 / NRS 248).